The following is a 349-amino-acid chain: tRNA N6-adenosine threonylcarbamoyltransferase (349 aa).

Residues His-117, His-121, and Tyr-138 each coordinate Fe cation. Substrate-binding positions include 138–142, Asp-170, Asp-191, and Asn-271; that span reads YVAGG. Asp-299 contributes to the Fe cation binding site.

Belongs to the KAE1 / TsaD family. The cofactor is Fe(2+).

It localises to the cytoplasm. It catalyses the reaction L-threonylcarbamoyladenylate + adenosine(37) in tRNA = N(6)-L-threonylcarbamoyladenosine(37) in tRNA + AMP + H(+). Its function is as follows. Required for the formation of a threonylcarbamoyl group on adenosine at position 37 (t(6)A37) in tRNAs that read codons beginning with adenine. Is probably involved in the transfer of the threonylcarbamoyl moiety of threonylcarbamoyl-AMP (TC-AMP) to the N6 group of A37. The chain is tRNA N6-adenosine threonylcarbamoyltransferase from Aeropyrum pernix (strain ATCC 700893 / DSM 11879 / JCM 9820 / NBRC 100138 / K1).